The primary structure comprises 230 residues: Large ribosomal subunit protein uL1 (230 aa).

Belongs to the universal ribosomal protein uL1 family. Part of the 50S ribosomal subunit.

Its function is as follows. Binds directly to 23S rRNA. The L1 stalk is quite mobile in the ribosome, and is involved in E site tRNA release. Functionally, protein L1 is also a translational repressor protein, it controls the translation of the L11 operon by binding to its mRNA. The protein is Large ribosomal subunit protein uL1 of Bradyrhizobium sp. (strain ORS 278).